The sequence spans 279 residues: HTH-type transcriptional activator RhaS (279 aa).

An HTH araC/xylS-type domain is found at 175 to 273 (QALLGWLQNN…SQAPKSLRHQ (99 aa)). DNA-binding regions (H-T-H motif) lie at residues 192–213 (GSLADRFSLPLRTLHRQLKQHT) and 240–263 (ITTIAHACGFSDSNHFSTQFRKAF).

Binds DNA as a dimer.

The protein localises to the cytoplasm. Activates expression of the rhaBAD and rhaT operons. The sequence is that of HTH-type transcriptional activator RhaS from Pectobacterium carotovorum subsp. carotovorum (strain PC1).